We begin with the raw amino-acid sequence, 698 residues long: Macrophomene synthase (698 aa).

A terpene cyclase region spans residues 21-340 (MEYMYSVPLD…SCDRYSSYRR (320 aa)). Mg(2+) is bound at residue Asp113. Residues 113–117 (DNIAE) carry the DDXXD 1 motif. An NSE/DTE motif is present at residues 242–250 (NDFFSFNYE). Residues 341-696 (EKHQMELPIR…IQLALERLRI (356 aa)) form a prenyltransferase region. Residues 368–387 (LPNGKQLDAPTESSGKDLSD) are disordered. Residues Lys417, Arg420, and His449 each coordinate isopentenyl diphosphate. Residues Asp456 and Asp460 each coordinate Mg(2+). The DDXXD 2 signature appears at 456 to 460 (DDIED). Arg465 provides a ligand contact to dimethylallyl diphosphate. Arg466 is an isopentenyl diphosphate binding site. The dimethylallyl diphosphate site is built by Lys543, Thr544, Gln579, Asn586, Lys596, and Lys606.

It in the N-terminal section; belongs to the terpene synthase family. The protein in the C-terminal section; belongs to the FPP/GGPP synthase family. Hexamer. Requires Mg(2+) as cofactor.

The enzyme catalyses 5 isopentenyl diphosphate + dimethylallyl diphosphate = all-trans-hexaprenyl diphosphate + 5 diphosphate. It catalyses the reaction all-trans-hexaprenyl diphosphate = macrophomene + diphosphate. Its function is as follows. Bifunctional terpene synthase that converts dimethylallyl diphosphate (DMAPP) and isopentenyl diphosphate (IPP) into macrophomene as a single product. The C-terminal prenyltransferase (PT) domain of MpMS catalyzes formation of hexaprenyl diphosphate (HexPP), whereas the N-terminal terpene cyclase (TC) domain catalyzes the cyclization of HexPP to macrophomene. This chain is Macrophomene synthase, found in Macrophomina phaseolina (strain MS6) (Charcoal rot fungus).